A 244-amino-acid polypeptide reads, in one-letter code: 1-(5-phosphoribosyl)-5-[(5-phosphoribosylamino)methylideneamino] imidazole-4-carboxamide isomerase (244 aa).

Residue Asp-8 is the Proton acceptor of the active site. The active-site Proton donor is the Asp-130.

This sequence belongs to the HisA/HisF family.

It localises to the cytoplasm. The enzyme catalyses 1-(5-phospho-beta-D-ribosyl)-5-[(5-phospho-beta-D-ribosylamino)methylideneamino]imidazole-4-carboxamide = 5-[(5-phospho-1-deoxy-D-ribulos-1-ylimino)methylamino]-1-(5-phospho-beta-D-ribosyl)imidazole-4-carboxamide. Its pathway is amino-acid biosynthesis; L-histidine biosynthesis; L-histidine from 5-phospho-alpha-D-ribose 1-diphosphate: step 4/9. This Syntrophomonas wolfei subsp. wolfei (strain DSM 2245B / Goettingen) protein is 1-(5-phosphoribosyl)-5-[(5-phosphoribosylamino)methylideneamino] imidazole-4-carboxamide isomerase.